Here is a 220-residue protein sequence, read N- to C-terminus: ATP phosphoribosyltransferase (220 aa).

This sequence belongs to the ATP phosphoribosyltransferase family. Short subfamily. Heteromultimer composed of HisG and HisZ subunits.

It localises to the cytoplasm. It carries out the reaction 1-(5-phospho-beta-D-ribosyl)-ATP + diphosphate = 5-phospho-alpha-D-ribose 1-diphosphate + ATP. Its pathway is amino-acid biosynthesis; L-histidine biosynthesis; L-histidine from 5-phospho-alpha-D-ribose 1-diphosphate: step 1/9. Functionally, catalyzes the condensation of ATP and 5-phosphoribose 1-diphosphate to form N'-(5'-phosphoribosyl)-ATP (PR-ATP). Has a crucial role in the pathway because the rate of histidine biosynthesis seems to be controlled primarily by regulation of HisG enzymatic activity. The protein is ATP phosphoribosyltransferase of Anaeromyxobacter sp. (strain Fw109-5).